The sequence spans 441 residues: uncharacterized protein (441 aa).

Residue 57–64 (GVRRGGKT) coordinates ATP.

This is an uncharacterized protein from Methanocaldococcus jannaschii (strain ATCC 43067 / DSM 2661 / JAL-1 / JCM 10045 / NBRC 100440) (Methanococcus jannaschii).